The primary structure comprises 548 residues: Glycosyl hydrolase family 109 protein 3 (548 aa).

The N-terminal stretch at 1 to 21 (MKLKKLLLSVLMLLSISGLQA) is a signal peptide. NAD(+) is bound by residues 71–72 (MR), Asp93, 141–144 (WNHH), 161–162 (EV), and Asn190. Tyr219 is a substrate binding site. Position 240-244 (240-244 (DNLHW)) interacts with NAD(+). Substrate contacts are provided by residues Arg245, 257 to 260 (YATH), and Tyr335. Tyr257 contacts NAD(+).

Belongs to the Gfo/Idh/MocA family. Glycosyl hydrolase 109 subfamily. NAD(+) serves as cofactor.

Functionally, glycosidase. The sequence is that of Glycosyl hydrolase family 109 protein 3 from Phocaeicola vulgatus (strain ATCC 8482 / DSM 1447 / JCM 5826 / CCUG 4940 / NBRC 14291 / NCTC 11154) (Bacteroides vulgatus).